Here is a 503-residue protein sequence, read N- to C-terminus: Orphan methyltransferase M.Rho11sI (503 aa).

Residues 4 to 500 enclose the SAM-dependent MTase C5-type domain; that stretch reads LRVMSLFSGI…KELIHTYVNE (497 aa). Residue C78 is part of the active site.

This sequence belongs to the class I-like SAM-binding methyltransferase superfamily. C5-methyltransferase family.

It carries out the reaction a 2'-deoxycytidine in DNA + S-adenosyl-L-methionine = a 5-methyl-2'-deoxycytidine in DNA + S-adenosyl-L-homocysteine + H(+). Its function is as follows. A methyltransferase that methylates C-? within the sequences 5'-GGCC-3' and 5'-GAGCTC-3'. A methyltransferase that methylates C-1 within the sequences 5'-GGCC-3' and C-2 in 5'-GCNGC-3'. Modification confers resistance against restriction enzymes that recognize these sequences. In Bacillus subtilis (Bacteriophage rho-11s), this protein is Orphan methyltransferase M.Rho11sI.